The primary structure comprises 217 residues: MATPTPRHQETPQETTERERCEQWTDELFRTSPMVRFMTKHLSLLDCNPLSPLRTASSSSHATASARAQPKLVIAPCPPSIAGGFSPSLRSEPTSESSILLCSNRIFSKAHLEDTLSHEMVHWFDHCRFLVDWSNLRHHACSEIRAASLSGDCGFVREWQRRNYGFKLQHQNCVKRRAVLSILANPACAGDRQKAEQTVDEVFQSCFGDTRPFDEIY.

The segment at 1-21 is disordered; that stretch reads MATPTPRHQETPQETTERERC. A compositionally biased stretch (basic and acidic residues) spans 7 to 21; it reads RHQETPQETTERERC. His118 is a binding site for a divalent metal cation. Glu119 is an active-site residue. His122 provides a ligand contact to a divalent metal cation.

The protein belongs to the peptidase M76 family.

It localises to the mitochondrion inner membrane. In terms of biological role, has a dual role in the assembly of mitochondrial ATPase. Acts as a protease that removes N-terminal residues of mitochondrial ATPase CF(0) subunit 6 at the intermembrane space side. Also involved in the correct assembly of the membrane-embedded ATPase CF(0) particle, probably mediating association of subunit 6 with the subunit 9 ring. This Mycosarcoma maydis (Corn smut fungus) protein is Mitochondrial inner membrane protease ATP23 (ATP23).